The primary structure comprises 417 residues: Phosphoglycerate kinase 1 (417 aa).

At Ser2 the chain carries N-acetylserine. Phosphoserine occurs at positions 2 and 4. Lys6 carries the N6-succinyllysine modification. At Lys11 the chain carries N6-acetyllysine. 6 residues coordinate (2R)-3-phosphoglycerate: Val23, Asp24, Phe25, Asn26, Gln38, and Arg39. The tract at residues Gln38–Ala43 is mitochondrial targeting region exposed following cis-trans isomerization by PIN1 and recognized by the TOM complex for mitochondrial translocation of the protein. Residue Lys48 is modified to N6-acetyllysine; alternate. Lys48 carries the N6-succinyllysine; alternate modification. Positions 62, 63, 65, and 66 each coordinate (2R)-3-phosphoglycerate. Lys75 carries the post-translational modification N6-acetyllysine. Tyr76 carries the phosphotyrosine modification. N6-acetyllysine is present on residues Lys86 and Lys91. Residue Lys97 is modified to N6-acetyllysine; alternate. Lys97 bears the N6-(2-hydroxyisobutyryl)lysine; alternate mark. Residues Leu122 and Arg123 each coordinate (2R)-3-phosphoglycerate. The residue at position 131 (Lys131) is an N6-acetyllysine; alternate. Position 131 is an N6-malonyllysine; alternate (Lys131). N6-acetyllysine is present on Lys146. (2R)-3-phosphoglycerate-binding residues include His170 and Arg171. Lys191 is modified (N6-succinyllysine). The residue at position 196 (Tyr196) is a Phosphotyrosine. Lys199 bears the N6-acetyllysine mark. A Phosphoserine; by MAPK1 modification is found at Ser203. Gly214 is a binding site for ADP. Gly214 provides a ligand contact to CDP. AMP-binding residues include Ala215 and Lys216. Ala215 serves as a coordination point for ATP. Mg(2+) is bound at residue Ala215. Residue Lys216 is modified to N6-(2-hydroxyisobutyryl)lysine. Mg(2+) is bound by residues Ala218 and Asp219. CDP is bound at residue Asp219. Lys220 is an AMP binding site. Lys220 contributes to the ATP binding site. Lys220 is modified (N6-(2-hydroxyisobutyryl)lysine). Gly238 lines the ADP pocket. CDP is bound at residue Gly238. Position 239 (Gly239) interacts with AMP. Residue Gly239 participates in ATP binding. N6-acetyllysine is present on residues Lys267 and Lys291. Gly313 provides a ligand contact to AMP. Gly313 contacts ATP. At Lys323 the chain carries N6-(2-hydroxyisobutyryl)lysine. CDP is bound by residues Gly338, Val340, and Phe343. Phe343 is a binding site for ADP. Glu344 provides a ligand contact to AMP. Glu344 lines the ATP pocket. An N6-acetyllysine modification is found at Lys361. Asp375 and Thr376 together coordinate ATP. Residue Asp375 participates in Mg(2+) binding.

This sequence belongs to the phosphoglycerate kinase family. As to quaternary structure, monomer. Interacts with kinase MAPK1/ERK2; the interaction is direct, occurs under hypoxic conditions, and promotes its interaction with PIN1. Interacts with peptidyl-prolyl cis-trans isomerase PIN1; the interaction is direct, occurs under hypoxic conditions, and targets the protein to the mitochondrion by promoting interactions with the TOM complex. Interacts with mitochondrial circRNA mcPGK1 (via its 2nd stem-loop); the interaction is direct and targets the protein to the mitochondrion by promoting interactions with the TOM complex. Interacts with pyruvate dehydrogenase kinase PDK1; the interaction is direct, occurs under hypoxic conditions and leads to PDK1-mediated inhibition of pyruvate dehydrogenase complex activity. Requires Mg(2+) as cofactor. In terms of processing, phosphorylated at Ser-203 by MAPK1/ERK2 under hypoxic conditions, which promotes its mitochondrial targeting. In terms of tissue distribution, mainly expressed in spermatogonia. Localized on the principle piece in the sperm (at protein level). Expression significantly decreased in the testis of elderly men.

It is found in the cytoplasm. It localises to the cytosol. The protein localises to the mitochondrion matrix. It carries out the reaction (2R)-3-phosphoglycerate + ATP = (2R)-3-phospho-glyceroyl phosphate + ADP. The enzyme catalyses L-seryl-[protein] + ATP = O-phospho-L-seryl-[protein] + ADP + H(+). It participates in carbohydrate degradation; glycolysis; pyruvate from D-glyceraldehyde 3-phosphate: step 2/5. Its activity is regulated as follows. Specifically inhibited by heterocyclic compound CBR-470-0. Functionally, catalyzes one of the two ATP producing reactions in the glycolytic pathway via the reversible conversion of 1,3-diphosphoglycerate to 3-phosphoglycerate. Both L- and D- forms of purine and pyrimidine nucleotides can be used as substrates, but the activity is much lower on pyrimidines. In addition to its role as a glycolytic enzyme, it seems that PGK1 acts as a polymerase alpha cofactor protein (primer recognition protein). Acts as a protein kinase when localized to the mitochondrion where it phosphorylates pyruvate dehydrogenase kinase PDK1 to inhibit pyruvate dehydrogenase complex activity and suppress the formation of acetyl-coenzyme A from pyruvate, and consequently inhibit oxidative phosphorylation and promote glycolysis. May play a role in sperm motility. This is Phosphoglycerate kinase 1 (PGK1) from Homo sapiens (Human).